The sequence spans 395 residues: Accessory Sec system protein translocase subunit SecY2 (395 aa).

10 consecutive transmembrane segments (helical) span residues 13-33 (VSFS…PLPF), 63-83 (ISIF…IQLL), 102-122 (LMQF…VFAF), 128-148 (GLED…VVWL), 157-177 (VGAS…PNII), 190-210 (WIWL…WLAF), 239-259 (MAAM…LMVG), 272-292 (VFQA…FTFV), 326-346 (LIWI…VFGL), and 355-375 (YAGF…MGGI).

The protein belongs to the SecY/SEC61-alpha family. SecY2 subfamily. Component of the accessory SecA2/SecY2 protein translocase complex required to export cell wall proteins. May form heterotrimers with SecE and SecG subunits.

It localises to the cell membrane. Functionally, part of the accessory SecA2/SecY2 system specifically required for export of possible cell wall proteins. The central subunit of a protein translocation channel. This Lactobacillus johnsonii (strain CNCM I-12250 / La1 / NCC 533) protein is Accessory Sec system protein translocase subunit SecY2.